Here is a 491-residue protein sequence, read N- to C-terminus: Probable cysteine proteinase 024R (491 aa).

Catalysis depends on residues Cys-132, His-325, and Asn-355. Residues 467–487 (ALDLALLVLPALLIVIVVLIG) traverse the membrane as a helical segment.

The protein belongs to the peptidase C1 family.

It localises to the membrane. Functionally, probable cysteine protease. This Invertebrate iridescent virus 3 (IIV-3) protein is Probable cysteine proteinase 024R.